The sequence spans 493 residues: Glutamate--tRNA ligase (493 aa).

The 'HIGH' region motif lies at 10-20 (PSPTGTPHVGL). The 'KMSKS' region motif lies at 254 to 258 (KLSKR). An ATP-binding site is contributed by Lys257.

The protein belongs to the class-I aminoacyl-tRNA synthetase family. Glutamate--tRNA ligase type 1 subfamily. Monomer.

It is found in the cytoplasm. It catalyses the reaction tRNA(Glu) + L-glutamate + ATP = L-glutamyl-tRNA(Glu) + AMP + diphosphate. Catalyzes the attachment of glutamate to tRNA(Glu) in a two-step reaction: glutamate is first activated by ATP to form Glu-AMP and then transferred to the acceptor end of tRNA(Glu). This Corynebacterium glutamicum (strain ATCC 13032 / DSM 20300 / JCM 1318 / BCRC 11384 / CCUG 27702 / LMG 3730 / NBRC 12168 / NCIMB 10025 / NRRL B-2784 / 534) protein is Glutamate--tRNA ligase.